A 51-amino-acid polypeptide reads, in one-letter code: Large ribosomal subunit protein bL33 (51 aa).

The protein belongs to the bacterial ribosomal protein bL33 family.

The protein is Large ribosomal subunit protein bL33 of Methylococcus capsulatus (strain ATCC 33009 / NCIMB 11132 / Bath).